The primary structure comprises 265 residues: Thiazole synthase (265 aa).

Lysine 106 (schiff-base intermediate with DXP) is an active-site residue. 1-deoxy-D-xylulose 5-phosphate-binding positions include glycine 167, alanine 193–glycine 194, and asparagine 215–threonine 216. The tract at residues glycine 245–serine 265 is disordered.

This sequence belongs to the ThiG family. As to quaternary structure, homotetramer. Forms heterodimers with either ThiH or ThiS.

Its subcellular location is the cytoplasm. It carries out the reaction [ThiS sulfur-carrier protein]-C-terminal-Gly-aminoethanethioate + 2-iminoacetate + 1-deoxy-D-xylulose 5-phosphate = [ThiS sulfur-carrier protein]-C-terminal Gly-Gly + 2-[(2R,5Z)-2-carboxy-4-methylthiazol-5(2H)-ylidene]ethyl phosphate + 2 H2O + H(+). It participates in cofactor biosynthesis; thiamine diphosphate biosynthesis. Functionally, catalyzes the rearrangement of 1-deoxy-D-xylulose 5-phosphate (DXP) to produce the thiazole phosphate moiety of thiamine. Sulfur is provided by the thiocarboxylate moiety of the carrier protein ThiS. In vitro, sulfur can be provided by H(2)S. The sequence is that of Thiazole synthase from Methylobacterium sp. (strain 4-46).